The primary structure comprises 529 residues: Peptide chain release factor 3 (529 aa).

One can recognise a tr-type G domain in the interval 10–279 (EQRRCFGIIS…ALVEMAPAPG (270 aa)). GTP is bound by residues 19–26 (SHPDAGKT), 87–91 (DTPGH), and 141–144 (NKMD).

Belongs to the TRAFAC class translation factor GTPase superfamily. Classic translation factor GTPase family. PrfC subfamily.

It localises to the cytoplasm. Its function is as follows. Increases the formation of ribosomal termination complexes and stimulates activities of RF-1 and RF-2. It binds guanine nucleotides and has strong preference for UGA stop codons. It may interact directly with the ribosome. The stimulation of RF-1 and RF-2 is significantly reduced by GTP and GDP, but not by GMP. This Desulfatibacillum aliphaticivorans protein is Peptide chain release factor 3.